A 73-amino-acid chain; its full sequence is Small ribosomal subunit protein uS15c (73 aa).

The protein belongs to the universal ribosomal protein uS15 family. Part of the 30S ribosomal subunit.

The protein resides in the plastid. It localises to the chloroplast. The chain is Small ribosomal subunit protein uS15c (rps15) from Welwitschia mirabilis (Tree tumbo).